The primary structure comprises 212 residues: Large ribosomal subunit protein uL3 (212 aa).

Q153 is subject to N5-methylglutamine.

Belongs to the universal ribosomal protein uL3 family. In terms of assembly, part of the 50S ribosomal subunit. Forms a cluster with proteins L14 and L19. Post-translationally, methylated by PrmB.

In terms of biological role, one of the primary rRNA binding proteins, it binds directly near the 3'-end of the 23S rRNA, where it nucleates assembly of the 50S subunit. This is Large ribosomal subunit protein uL3 from Shewanella denitrificans (strain OS217 / ATCC BAA-1090 / DSM 15013).